Consider the following 214-residue polypeptide: Rhodanese-like domain-containing protein 10 (214 aa).

In terms of domain architecture, Rhodanese spans 58–182 (ASEGYILLDV…VSEGDFPEIE (125 aa)). The Cysteine persulfide intermediate role is filled by cysteine 142. Residues 190–206 (ATIGGVSFYLLKLLVLL) traverse the membrane as a helical segment.

It is found in the membrane. This Arabidopsis thaliana (Mouse-ear cress) protein is Rhodanese-like domain-containing protein 10 (STR10).